The primary structure comprises 119 residues: Ribonuclease P protein component (119 aa).

It belongs to the RnpA family. Consists of a catalytic RNA component (M1 or rnpB) and a protein subunit.

It carries out the reaction Endonucleolytic cleavage of RNA, removing 5'-extranucleotides from tRNA precursor.. Its function is as follows. RNaseP catalyzes the removal of the 5'-leader sequence from pre-tRNA to produce the mature 5'-terminus. It can also cleave other RNA substrates such as 4.5S RNA. The protein component plays an auxiliary but essential role in vivo by binding to the 5'-leader sequence and broadening the substrate specificity of the ribozyme. This Borreliella burgdorferi (strain ATCC 35210 / DSM 4680 / CIP 102532 / B31) (Borrelia burgdorferi) protein is Ribonuclease P protein component.